The chain runs to 590 residues: Arginine--tRNA ligase (590 aa).

Positions 130-140 (PNIAKEMHVGH) match the 'HIGH' region motif.

Belongs to the class-I aminoacyl-tRNA synthetase family. Monomer.

The protein localises to the cytoplasm. The catalysed reaction is tRNA(Arg) + L-arginine + ATP = L-arginyl-tRNA(Arg) + AMP + diphosphate. In Synechococcus sp. (strain CC9311), this protein is Arginine--tRNA ligase.